The chain runs to 595 residues: Cardiolipin synthase (CMP-forming) / mitochondrial hydrolase fusion protein (595 aa).

The transit peptide at 1-24 (MLHTINYRSWHLAARQLGRSTFRK) directs the protein to the mitochondrion. 2 consecutive transmembrane segments (helical) span residues 538–560 (ALQL…ASFA) and 564–586 (LFYI…RNTF).

The protein in the N-terminal section; belongs to the HAD-like hydrolase superfamily. It in the C-terminal section; belongs to the CDP-alcohol phosphatidyltransferase class-I family. It depends on Mg(2+) as a cofactor. In terms of processing, proteolytically cleaved, presumably during its import into the mitochondrion by mitochondrial processing peptidase.

It is found in the mitochondrion. The protein resides in the mitochondrion inner membrane. The enzyme catalyses a CDP-1,2-diacyl-sn-glycerol + a 1,2-diacyl-sn-glycero-3-phospho-(1'-sn-glycerol) = a cardiolipin + CMP + H(+). Its function is as follows. Catalyzes the synthesis of cardiolipin (CL) (diphosphatidylglycerol) by specifically transferring a phosphatidyl group from CDP-diacylglycerol to phosphatidylglycerol (PG). CL is a key phospholipid in mitochondrial membranes and plays important roles in maintaining the functional integrity and dynamics of mitochondria under both optimal and stress conditions. In terms of biological role, activity is dispensable for viability. This chain is Cardiolipin synthase (CMP-forming) / mitochondrial hydrolase fusion protein, found in Schizosaccharomyces pombe (strain 972 / ATCC 24843) (Fission yeast).